Here is a 496-residue protein sequence, read N- to C-terminus: Polyphosphate:AMP phosphotransferase (496 aa).

PPK2 stretches follow at residues 11-234 (IDKD…LQAA) and 269-495 (LDKD…YKKD).

Belongs to the polyphosphate kinase 2 (PPK2) family. Class II subfamily. As to quaternary structure, homodimer. Mg(2+) serves as cofactor.

The catalysed reaction is [phosphate](n) + ADP = [phosphate](n+1) + AMP. Functionally, uses inorganic polyphosphate (polyP) as a donor to convert AMP to ADP. Can also convert GMP to GDP, with lower efficiency. Cannot dephosphorylate ADP in the presence of polyP. This chain is Polyphosphate:AMP phosphotransferase, found in Pseudomonas aeruginosa (strain ATCC 15692 / DSM 22644 / CIP 104116 / JCM 14847 / LMG 12228 / 1C / PRS 101 / PAO1).